Reading from the N-terminus, the 420-residue chain is Vasopressin V1a receptor (420 aa).

A disordered region spans residues M1–P20. The Extracellular segment spans residues M1–E54. N-linked (GlcNAc...) asparagine glycosylation occurs at N27. Residues I55–A75 traverse the membrane as a helical segment. Residues L76–H92 are Cytoplasmic-facing. The chain crosses the membrane as a helical span at residues L93–I113. Residues T114–R125 lie on the Extracellular side of the membrane. C124 and C205 are joined by a disulfide. A helical transmembrane segment spans residues V126–T146. Residues A147–R168 lie on the Cytoplasmic side of the membrane. The chain crosses the membrane as a helical span at residues L169 to F189. Residues S190–G225 lie on the Extracellular side of the membrane. Residue N198 is glycosylated (N-linked (GlcNAc...) asparagine). A helical membrane pass occupies residues V226–W246. The Cytoplasmic segment spans residues R247–M294. A helical membrane pass occupies residues T295 to W315. The Extracellular portion of the chain corresponds to S316 to S331. The chain crosses the membrane as a helical span at residues I332–F352. Topologically, residues F353–T420 are cytoplasmic. S-palmitoyl cysteine attachment occurs at residues C367 and C368. The interval D379 to R411 is disordered. Polar residues predominate over residues S389 to W403. Position 406 is a phosphoserine (S406).

This sequence belongs to the G-protein coupled receptor 1 family. Vasopressin/oxytocin receptor subfamily.

It localises to the cell membrane. In terms of biological role, receptor for arginine vasopressin. The activity of this receptor is mediated by G proteins which activate a phosphatidyl-inositol-calcium second messenger system. Involved in social memory formation. The sequence is that of Vasopressin V1a receptor (Avpr1a) from Microtus ochrogaster (Prairie vole).